A 511-amino-acid chain; its full sequence is Probable eukaryotic translation initiation factor 4H (511 aa).

Disordered regions lie at residues 25–63 (SWADDDFDLPTAPAAREESGSGLKRGDPGYFESLPDRGS) and 154–511 (TIRV…EVKI). Residues 39–51 (AREESGSGLKRGD) are compositionally biased toward basic and acidic residues. In terms of domain architecture, RRM spans 86 to 162 (FTAFIGNLSF…RTIRVNVAEA (77 aa)). Polar residues predominate over residues 179 to 196 (WRRSTPLASRESSSQPSR). Basic and acidic residues-rich tracts occupy residues 230–247 (VRRDSSGPGHTREPRDPG) and 261–270 (LAEKVDRDVP). Residues 285–318 (LADTEQTWSRGTKLRTPTTTSRQSSADSTPSSGA) show a composition bias toward polar residues. Low complexity predominate over residues 331-349 (TAGSPSATANATPAAPASG). The residue at position 334 (Ser-334) is a Phosphoserine. 2 stretches are compositionally biased toward basic and acidic residues: residues 360 to 388 (AAREKAAEEKLAQREGERRKAREEAEKQK) and 394 to 419 (KPVEGEKLGWREEKLRSIKAAQDKVA). The segment covering 420 to 434 (GKPTTAPATTTNTGA) has biased composition (low complexity). Positions 438–448 (GSADRAKKDEQ) are enriched in basic and acidic residues. Positions 451–467 (EQVQPSRKSSQTGATSE) are enriched in polar residues. A compositionally biased stretch (basic and acidic residues) spans 502 to 511 (VTKGVEEVKI).

The protein resides in the cytoplasm. Its subcellular location is the P-body. Functionally, probable translation initiation factor. In Cryptococcus neoformans var. grubii serotype A (strain H99 / ATCC 208821 / CBS 10515 / FGSC 9487) (Filobasidiella neoformans var. grubii), this protein is Probable eukaryotic translation initiation factor 4H.